The primary structure comprises 229 residues: Enolase-phosphatase E1 (229 aa).

This sequence belongs to the HAD-like hydrolase superfamily. MasA/MtnC family. Monomer. Mg(2+) is required as a cofactor.

It carries out the reaction 5-methylsulfanyl-2,3-dioxopentyl phosphate + H2O = 1,2-dihydroxy-5-(methylsulfanyl)pent-1-en-3-one + phosphate. It participates in amino-acid biosynthesis; L-methionine biosynthesis via salvage pathway; L-methionine from S-methyl-5-thio-alpha-D-ribose 1-phosphate: step 3/6. It functions in the pathway amino-acid biosynthesis; L-methionine biosynthesis via salvage pathway; L-methionine from S-methyl-5-thio-alpha-D-ribose 1-phosphate: step 4/6. Its function is as follows. Bifunctional enzyme that catalyzes the enolization of 2,3-diketo-5-methylthiopentyl-1-phosphate (DK-MTP-1-P) into the intermediate 2-hydroxy-3-keto-5-methylthiopentenyl-1-phosphate (HK-MTPenyl-1-P), which is then dephosphorylated to form the acireductone 1,2-dihydroxy-3-keto-5-methylthiopentene (DHK-MTPene). This chain is Enolase-phosphatase E1, found in Yersinia enterocolitica serotype O:8 / biotype 1B (strain NCTC 13174 / 8081).